The primary structure comprises 457 residues: Bifunctional protein GlmU (457 aa).

The segment at M1 to R229 is pyrophosphorylase. Residues L8–G11, K22, Q73, and G78–T79 contribute to the UDP-N-acetyl-alpha-D-glucosamine site. Mg(2+) is bound at residue D103. UDP-N-acetyl-alpha-D-glucosamine contacts are provided by G140, E155, N170, and N227. A Mg(2+)-binding site is contributed by N227. The tract at residues V230–N250 is linker. Residues G251–K457 form an N-acetyltransferase region. UDP-N-acetyl-alpha-D-glucosamine is bound by residues R332 and K350. Residue H362 is the Proton acceptor of the active site. UDP-N-acetyl-alpha-D-glucosamine is bound by residues Y365 and N376. Acetyl-CoA contacts are provided by residues N385–Y386, A422, and R439.

It in the N-terminal section; belongs to the N-acetylglucosamine-1-phosphate uridyltransferase family. In the C-terminal section; belongs to the transferase hexapeptide repeat family. As to quaternary structure, homotrimer. Mg(2+) serves as cofactor.

The protein resides in the cytoplasm. It carries out the reaction alpha-D-glucosamine 1-phosphate + acetyl-CoA = N-acetyl-alpha-D-glucosamine 1-phosphate + CoA + H(+). The enzyme catalyses N-acetyl-alpha-D-glucosamine 1-phosphate + UTP + H(+) = UDP-N-acetyl-alpha-D-glucosamine + diphosphate. The protein operates within nucleotide-sugar biosynthesis; UDP-N-acetyl-alpha-D-glucosamine biosynthesis; N-acetyl-alpha-D-glucosamine 1-phosphate from alpha-D-glucosamine 6-phosphate (route II): step 2/2. It participates in nucleotide-sugar biosynthesis; UDP-N-acetyl-alpha-D-glucosamine biosynthesis; UDP-N-acetyl-alpha-D-glucosamine from N-acetyl-alpha-D-glucosamine 1-phosphate: step 1/1. Its pathway is bacterial outer membrane biogenesis; LPS lipid A biosynthesis. Catalyzes the last two sequential reactions in the de novo biosynthetic pathway for UDP-N-acetylglucosamine (UDP-GlcNAc). The C-terminal domain catalyzes the transfer of acetyl group from acetyl coenzyme A to glucosamine-1-phosphate (GlcN-1-P) to produce N-acetylglucosamine-1-phosphate (GlcNAc-1-P), which is converted into UDP-GlcNAc by the transfer of uridine 5-monophosphate (from uridine 5-triphosphate), a reaction catalyzed by the N-terminal domain. This is Bifunctional protein GlmU from Clostridium botulinum (strain 657 / Type Ba4).